Here is a 504-residue protein sequence, read N- to C-terminus: Lysine--tRNA ligase (504 aa).

Glu411 and Glu418 together coordinate Mg(2+).

This sequence belongs to the class-II aminoacyl-tRNA synthetase family. Homodimer. The cofactor is Mg(2+).

The protein resides in the cytoplasm. It carries out the reaction tRNA(Lys) + L-lysine + ATP = L-lysyl-tRNA(Lys) + AMP + diphosphate. In Clostridium botulinum (strain Loch Maree / Type A3), this protein is Lysine--tRNA ligase.